Reading from the N-terminus, the 556-residue chain is Arginine--tRNA ligase (556 aa).

Residues A132–H142 carry the 'HIGH' region motif.

The protein belongs to the class-I aminoacyl-tRNA synthetase family. In terms of assembly, monomer.

Its subcellular location is the cytoplasm. It carries out the reaction tRNA(Arg) + L-arginine + ATP = L-arginyl-tRNA(Arg) + AMP + diphosphate. The chain is Arginine--tRNA ligase from Bacillus cereus (strain ATCC 14579 / DSM 31 / CCUG 7414 / JCM 2152 / NBRC 15305 / NCIMB 9373 / NCTC 2599 / NRRL B-3711).